The primary structure comprises 179 residues: Translation initiation factor IF-3 (179 aa).

It belongs to the IF-3 family. In terms of assembly, monomer.

The protein localises to the cytoplasm. Its function is as follows. IF-3 binds to the 30S ribosomal subunit and shifts the equilibrium between 70S ribosomes and their 50S and 30S subunits in favor of the free subunits, thus enhancing the availability of 30S subunits on which protein synthesis initiation begins. The chain is Translation initiation factor IF-3 from Treponema pallidum (strain Nichols).